The primary structure comprises 359 residues: tRNA N6-adenosine threonylcarbamoyltransferase (359 aa).

Fe cation contacts are provided by His-115 and His-119. Residues 137 to 141 (LVSGG), Asp-170, Gly-183, and Asn-283 contribute to the substrate site. Fe cation is bound at residue Asp-311. Positions 328–359 (APDSLDIAPRSRWPLDEKSAPVFGTGRRGAKA) are disordered.

It belongs to the KAE1 / TsaD family. Requires Fe(2+) as cofactor.

Its subcellular location is the cytoplasm. The enzyme catalyses L-threonylcarbamoyladenylate + adenosine(37) in tRNA = N(6)-L-threonylcarbamoyladenosine(37) in tRNA + AMP + H(+). Functionally, required for the formation of a threonylcarbamoyl group on adenosine at position 37 (t(6)A37) in tRNAs that read codons beginning with adenine. Is involved in the transfer of the threonylcarbamoyl moiety of threonylcarbamoyl-AMP (TC-AMP) to the N6 group of A37, together with TsaE and TsaB. TsaD likely plays a direct catalytic role in this reaction. The chain is tRNA N6-adenosine threonylcarbamoyltransferase from Brucella canis (strain ATCC 23365 / NCTC 10854 / RM-666).